A 345-amino-acid polypeptide reads, in one-letter code: Guanine nucleotide-binding protein G(i) subunit alpha-3 (345 aa).

In terms of domain architecture, G-alpha spans 23 to 345; sequence KEVKLLLLGA…KSNLMECGLY (323 aa). The interval 26-39 is G1 motif; the sequence is KLLLLGAGESGKST. Positions 33, 34, 35, 36, 37, 38, 39, 141, 142, 166, 167, 168, 169, 170, 171, 172, 192, 194, 260, 261, 263, 264, 316, 317, and 318 each coordinate GTP. A Mg(2+)-binding site is contributed by S38. Positions 164–172 are G2 motif; sequence DVLRTRVKT. T172 serves as a coordination point for Mg(2+). The segment at 187-196 is G3 motif; it reads FKMFDVGGQR. The tract at residues 256–263 is G4 motif; the sequence is ILFLNKKD. Residues 315 to 320 are G5 motif; it reads TCATDT.

This sequence belongs to the G-alpha family. G(i/o/t/z) subfamily. In terms of assembly, heterotrimeric G proteins are composed of 3 units; alpha, beta and gamma. The alpha subunit contains the guanine nucleotide binding site. GTP binding causes dissociation of the heterotrimer, liberating the individual subunits so that they can interact with downstream effector proteins.

The protein resides in the cytoplasm. It is found in the cell membrane. The protein localises to the cytoskeleton. It localises to the microtubule organizing center. Its subcellular location is the centrosome. The protein resides in the membrane. Functionally, heterotrimeric guanine nucleotide-binding proteins (G proteins) function as transducers downstream of G protein-coupled receptors (GPCRs) in numerous signaling cascades. The alpha chain contains the guanine nucleotide binding site and alternates between an active, GTP-bound state and an inactive, GDP-bound state. Signaling by an activated GPCR promotes GDP release and GTP binding. The alpha subunit has a low GTPase activity that converts bound GTP to GDP, thereby terminating the signal. Both GDP release and GTP hydrolysis are modulated by numerous regulatory proteins. Signaling is mediated via effector proteins, such as adenylate cyclase. Inhibits adenylate cyclase activity, leading to decreased intracellular cAMP levels. Stimulates the activity of receptor-regulated K(+) channels. The active GTP-bound form prevents the association of RGS14 with centrosomes and is required for the translocation of RGS14 from the cytoplasm to the plasma membrane. May play a role in cell division. The active GTP-bound form activates the calcium permeant TRPC5 ion channels. In Xenopus laevis (African clawed frog), this protein is Guanine nucleotide-binding protein G(i) subunit alpha-3 (gnai3).